The sequence spans 448 residues: MAANVPPSAEALTSGGAAHKTAEDIANQYDLLPKLIPYLDRHLVFPLLEFSSGQDDDSEIVRAKYELLKHTNMTDYVANLWQEINNSDTIPDEFVKKREEVLAKLQHYQNESEKITELLQDEAVVGNLRSDKVANLRFLEEQHGVTIEMVNSLYDYGRFQYSCGSYGNAAELLYQFRVLSTDNDKVASATWGKLASEILTTNWEAAMEEVQKAKDSIETRLFNNPVGQLHNRSWLIHWSLFPFFNHDPARDVLTDLFFSPAYINTIQTSCPWILRYLAAAVITNRNRAHKNSSVYQKQLKDLIRVVRQEGYEYSDPITDFVKALYVDFDFEEAQKKLGEAEEVLRGDFFLVSAADAFVEAARHLISESYCKIHQRIDIKDLSTRLGLNQDEGEKWIVNLIRDTRVDAKIDYKEGTVIMNHPPQSVYQQVIEKTKGAFFRTQVLRFVAS.

The PCI domain maps to 254–423 (TDLFFSPAYI…GTVIMNHPPQ (170 aa)).

It belongs to the eIF-3 subunit E family. As to quaternary structure, component of the eukaryotic translation initiation factor 3 (eIF-3) complex.

The protein localises to the cytoplasm. Functionally, component of the eukaryotic translation initiation factor 3 (eIF-3) complex, which is involved in protein synthesis of a specialized repertoire of mRNAs and, together with other initiation factors, stimulates binding of mRNA and methionyl-tRNAi to the 40S ribosome. The eIF-3 complex specifically targets and initiates translation of a subset of mRNAs involved in cell proliferation. The sequence is that of Eukaryotic translation initiation factor 3 subunit E (int6) from Emericella nidulans (strain FGSC A4 / ATCC 38163 / CBS 112.46 / NRRL 194 / M139) (Aspergillus nidulans).